The following is a 403-amino-acid chain: ESX-5 secretion system protein EccE5 (403 aa).

Helical transmembrane passes span 9 to 29 (LALSWARLTTVFVIDLLILIV) and 43 to 63 (IAWWVGVGIAVLVTLLSVVTY).

It belongs to the EccE family. As to quaternary structure, part of the ESX-5 / type VII secretion system (T7SS), which is composed of cytosolic and membrane components. The ESX-5 membrane complex is composed of EccB5, EccC5, EccD5 and EccE5.

The protein resides in the cell inner membrane. In terms of biological role, part of the ESX-5 specialized secretion system, which is responsible for the secretion of EsxN and a number of PE_PGRS and PPE proteins. In Mycobacterium marinum (strain ATCC BAA-535 / M), this protein is ESX-5 secretion system protein EccE5.